Reading from the N-terminus, the 727-residue chain is Prolyl endopeptidase-like (727 aa).

Methionine 1 is modified (N-acetylmethionine). Residues serine 559, aspartate 645, and histidine 690 each act as charge relay system in the active site.

The protein belongs to the peptidase S9A family. In terms of assembly, homodimer. Interacts with the AP-1 complex. Expressed in pyramidal neurons of the temporal cortex and neocortex (at protein level). Widely expressed. Expressed at higher level in brain, skeletal muscle, heart and kidney. Expressed at the endplates in the neuromuscular junction.

The protein localises to the cytoplasm. The protein resides in the cytosol. Its subcellular location is the golgi apparatus. It localises to the trans-Golgi network. It is found in the cytoskeleton. The protein localises to the nucleus. Its activity is regulated as follows. Inhibited by PMSF and Prefabloc, as well as leupeptin at high concentrations. Partially inhibited by TPCK, a chymotrypsin inhibitor and E64, a cysteine protease inhibitor. Not affected by 4-amidinophenyl-methanesulfonyl fluoride (APMSF), pepstatin or EDTA. Inhibited by 1-isobutyl-3-oxo-3,5,6,7-tetrahydro-2H-cyclopenta[c]pyridine-4-carbonitrile. Serine peptidase whose precise substrate specificity remains unclear. Does not cleave peptides after a arginine or lysine residue. Regulates trans-Golgi network morphology and sorting by regulating the membrane binding of the AP-1 complex. May play a role in the regulation of synaptic vesicle exocytosis. In Homo sapiens (Human), this protein is Prolyl endopeptidase-like (PREPL).